The primary structure comprises 83 residues: Mu-theraphotoxin-Hhn2e (83 aa).

Residues 1-21 (MKASMFLALAGLVLLFVVGYA) form the signal peptide. The propeptide occupies 22–48 (SESEEKEFPRELLSKIFAVDDFKGEER). Cystine bridges form between C50–C65, C57–C70, and C64–C77. Residue L81 is modified to Leucine amide.

This sequence belongs to the neurotoxin 10 (Hwtx-1) family. 15 (Hntx-3) subfamily. As to quaternary structure, monomer. As to expression, expressed by the venom gland.

Its subcellular location is the secreted. Its function is as follows. Lethal neurotoxin. Selectively blocks tetrodotoxin-sensitive voltage-gated sodium channels (Nav). Does not affect tetrodotoxin-resistant voltage-gated sodium channels or calcium channels. The protein is Mu-theraphotoxin-Hhn2e of Cyriopagopus hainanus (Chinese bird spider).